The chain runs to 294 residues: MSHLKDPTTQYYTGEYPKQKQPTPGIQAKMTPVPDCGEKTYVGSGRLKDRKALVTGGDSGIGRAAAIAYAREGADVAISYLPVEEEDAQDVKKIIEECGRKAVLLPGDLSDEKFARSLVHEAHKALGGLDIMALVAGKQVAIPDIADLTSEQFQKTFAINVFALFWLTQEAIPLLPKGASIITTSSIQAYQPSPHLLDYAATKAAILNYSRGLAKQVAEKGIRVNIVAPGPIWTALQISGGQTQDKIPQFGQQTPMKRAGQPAELAPVYVYLASQESSYVTAEVHGVCGGEHLG.

Positions 1–32 are disordered; sequence MSHLKDPTTQYYTGEYPKQKQPTPGIQAKMTP. Lys-39 carries the post-translational modification N6-acetyllysine. 53-77 provides a ligand contact to NADP(+); that stretch reads LVTGGDSGIGRAAAIAYAREGADVA. Ser-186 is a binding site for substrate. Catalysis depends on Tyr-199, which acts as the Proton acceptor.

Belongs to the short-chain dehydrogenases/reductases (SDR) family.

This is an uncharacterized protein from Escherichia coli (strain K12).